Consider the following 747-residue polypeptide: MTILSGTTAAPRVNGTTMNGHSKPHTNGVHLNGHAPKATTESPWPQSEEKTLLDKFVEAYYEFESYKSGQTVKVDGKTLSLAGVVAAARHHAKISLDDSASIKDKVVKSRKVIADKVASGASVYGLSTGFGGSADTRTDQPLSLGHALLQHQHVGVLPSSSQPLDVLPLSDPMSATSMPEAWVRAAMLIRMNSLIRGHSGVRWELIEKIAEIFDANITPVVPLRSSISASGDLSPLSYIAGTVVGNPSIRVFDGPAAFGAREMVPSAKALASHGIDPLPLASKEPLGILNGTAFSAAVGALALNEAVHFAMLAQVCTAMGTEALVGTRLSFEPFIHATCRPHPGQIEAARNIYNLLEGTTFASVHHEEVHIAEDQGTLRQDRYPLRTSPQFLGPQLEDILHAYVSVTQECNSTTDNPLIDGETGEIHHGGNFQAMAVTNAMEKTRLALHHIGKLLFAQCTELVNPAMNNGLPPSLAATDPSLNYHTKGIDIATAAYVSELGYLANPVSTHIQSAEMHNQAVNSLALISARATVNSLDVLSLLISSYLYILCQALDLRALQMEFVKGVEEIIREELSLLFASVVSPAELEALTSKVLSAAQTSLDTSGSMDAPARMKKMASTTTIPLFDFLTELTLPDAISSGIAMVSIPSFRSHLASRATALLDQLRRDYLSGQRGAAPASPYLNKTRMVYEFVRLTLGVKMHGSENYARFAKGLGVEDETIGQNISRIHEAIRDGKMQAITVAMFA.

The segment covering 1 to 20 has biased composition (polar residues); the sequence is MTILSGTTAAPRVNGTTMNG. A disordered region spans residues 1-47; sequence MTILSGTTAAPRVNGTTMNGHSKPHTNGVHLNGHAPKATTESPWPQS. The Proton donor/acceptor role is filled by Tyr-124. Positions 229 to 231 form a cross-link, 5-imidazolinone (Ala-Gly); that stretch reads ASG. Ser-230 carries the post-translational modification 2,3-didehydroalanine (Ser). Positions 290, 380, 386, 416, 487, 515, and 518 each coordinate (E)-cinnamate.

It belongs to the PAL/histidase family. As to quaternary structure, homotetramer. Contains an active site 4-methylidene-imidazol-5-one (MIO), which is formed autocatalytically by cyclization and dehydration of residues Ala-Ser-Gly.

The protein resides in the cytoplasm. It catalyses the reaction L-phenylalanine = (E)-cinnamate + NH4(+). It functions in the pathway phenylpropanoid metabolism; trans-cinnamate biosynthesis; trans-cinnamate from L-phenylalanine: step 1/1. In terms of biological role, catalyzes the non-oxidative deamination of L-phenylalanine to form trans-cinnamic acid and a free ammonium ion. Facilitates the commitment step in phenylpropanoid pathways that produce secondary metabolites such as lignins, coumarins and flavonoids. In Pleurotus ostreatus (Oyster mushroom), this protein is Phenylalanine ammonia-lyase 2.